We begin with the raw amino-acid sequence, 156 residues long: SsrA-binding protein (156 aa).

Belongs to the SmpB family.

The protein localises to the cytoplasm. Functionally, required for rescue of stalled ribosomes mediated by trans-translation. Binds to transfer-messenger RNA (tmRNA), required for stable association of tmRNA with ribosomes. tmRNA and SmpB together mimic tRNA shape, replacing the anticodon stem-loop with SmpB. tmRNA is encoded by the ssrA gene; the 2 termini fold to resemble tRNA(Ala) and it encodes a 'tag peptide', a short internal open reading frame. During trans-translation Ala-aminoacylated tmRNA acts like a tRNA, entering the A-site of stalled ribosomes, displacing the stalled mRNA. The ribosome then switches to translate the ORF on the tmRNA; the nascent peptide is terminated with the 'tag peptide' encoded by the tmRNA and targeted for degradation. The ribosome is freed to recommence translation, which seems to be the essential function of trans-translation. This is SsrA-binding protein from Shouchella clausii (strain KSM-K16) (Alkalihalobacillus clausii).